Here is a 259-residue protein sequence, read N- to C-terminus: Transcription factor bHLH80 (259 aa).

Positions 1-25 (MQSTHISGGSSGGGGGGGGEVSRSG) are disordered. Over residues 9-20 (GSSGGGGGGGGE) the composition is skewed to gly residues. One can recognise a bHLH domain in the interval 187–237 (CATHPRSIAERVRRTRISDRIRRLQELVPNMDKQTNTADMLEEAVEYVKAL).

Homodimer. Expressed constitutively in roots, leaves, stems, and flowers.

The protein localises to the nucleus. This is Transcription factor bHLH80 (BHLH80) from Arabidopsis thaliana (Mouse-ear cress).